Consider the following 204-residue polypeptide: Altered inheritance of mitochondria protein 20 (204 aa).

The chain crosses the membrane as a helical span at residues 6–26 (VAVGTAVGIPIAVGVIIALIF).

The protein belongs to the SKG1 family.

It localises to the vacuole membrane. In terms of biological role, involved in cell cycle progression and surviving DNA damage. This chain is Altered inheritance of mitochondria protein 20 (AIM20), found in Saccharomyces cerevisiae (strain JAY291) (Baker's yeast).